Reading from the N-terminus, the 190-residue chain is MFKYYGVFNIPMYLTLFRIIMVPCFVAVFYWPIYWSPMLCTLIFFIAAITDWFDGFLARRWNQTSRIGGFLDPIADKIMIITALILISEHFHVWWMTLPISSIIIREILISSLRECIARVDNKNNISVIWLSKVKTFAQMLALIALLCRLNEWTVIMGVISLYTAMLLTLWSMCYYVYSVSSILLQYKLK.

Over 6-17 the chain is Cytoplasmic; that stretch reads GVFNIPMYLTLF. The helical transmembrane segment at 18–42 threads the bilayer; that stretch reads RIIMVPCFVAVFYWPIYWSPMLCTL. The Periplasmic segment spans residues 43-65; the sequence is IFFIAAITDWFDGFLARRWNQTS. The chain crosses the membrane as a helical span at residues 66 to 86; it reads RIGGFLDPIADKIMIITALIL. The Cytoplasmic segment spans residues 87 to 91; that stretch reads ISEHF. A helical membrane pass occupies residues 92 to 112; it reads HVWWMTLPISSIIIREILISS. Residues 113 to 150 lie on the Periplasmic side of the membrane; it reads LRECIARVDNKNNISVIWLSKVKTFAQMLALIALLCRL. A helical membrane pass occupies residues 151–173; that stretch reads NEWTVIMGVISLYTAMLLTLWSM. At 174-186 the chain is on the cytoplasmic side; sequence CYYVYSVSSILLQ.

Belongs to the CDP-alcohol phosphatidyltransferase class-I family.

It localises to the cell inner membrane. The catalysed reaction is a CDP-1,2-diacyl-sn-glycerol + sn-glycerol 3-phosphate = a 1,2-diacyl-sn-glycero-3-phospho-(1'-sn-glycero-3'-phosphate) + CMP + H(+). The protein operates within phospholipid metabolism; phosphatidylglycerol biosynthesis; phosphatidylglycerol from CDP-diacylglycerol: step 1/2. Its function is as follows. Catalyzes the conversion of cytidine diphosphate diacylglycerol (CDP-DG) and glycerol 3-phosphate into phosphatidylglycerol. Essential for the synthesis of anionic phospholipids, thereby playing a role in balancing the ratio of zwitterionic and anionic phospholipids, which is thought to be important for normal membrane function. This is CDP-diacylglycerol--glycerol-3-phosphate 3-phosphatidyltransferase from Blochmanniella floridana.